A 443-amino-acid chain; its full sequence is MDPLNLSWYDDDLERQNWSRPFNGSDGKADRPHYNYYATLLTLLIAVIVFGNVLVCMAVSREKALQTTTNYLIVSLAVADLLVATLVMPWVVYLEVVGEWKFSKIHCDIFVTLDVMMCTASILNLCAISIDRYTAVAMPMLYNTRYSSKRRVTVMIAIVWVLSFTISCPLLFGLNNADQNECIIANPAFVVYSSIVSFYVPFIVTLLVYIKIYIVLRRRRKRVNTKRSSRAFRSHLRAPLKGNCTHPEDMKLCTVIMKSNGSFPVNRRRVEAARRAQELEMEMLSSTSPPERTRYSPIPPSHHQLTLPDPSHHGLHSTPDSPAKPEKNGHAKNHPKIAKIFEIQTMPNGKTRTSLKTMSRRKLSQQKEKKATQMLAIVLGVFIICWLPFFITHILNIHCDCNIPPVLYSAFTWLGYVNSAVNPIIYTTFNIEFRKAFLKILHC.

Residues 1 to 37 lie on the Extracellular side of the membrane; that stretch reads MDPLNLSWYDDDLERQNWSRPFNGSDGKADRPHYNYY. N-linked (GlcNAc...) asparagine glycosylation is found at Asn-5, Asn-17, and Asn-23. Residues 38–60 form a helical membrane-spanning segment; the sequence is ATLLTLLIAVIVFGNVLVCMAVS. The Cytoplasmic segment spans residues 61-70; sequence REKALQTTTN. A helical membrane pass occupies residues 71–93; sequence YLIVSLAVADLLVATLVMPWVVY. Residues 94–108 lie on the Extracellular side of the membrane; the sequence is LEVVGEWKFSKIHCD. Cys-107 and Cys-182 are disulfide-bonded. The helical transmembrane segment at 109 to 130 threads the bilayer; it reads IFVTLDVMMCTASILNLCAISI. Residues 131-151 are Cytoplasmic-facing; it reads DRYTAVAMPMLYNTRYSSKRR. The chain crosses the membrane as a helical span at residues 152 to 172; sequence VTVMIAIVWVLSFTISCPLLF. The Extracellular segment spans residues 173-188; that stretch reads GLNNADQNECIIANPA. The chain crosses the membrane as a helical span at residues 189 to 213; it reads FVVYSSIVSFYVPFIVTLLVYIKIY. An interaction with PPP1R9B region spans residues 211–373; that stretch reads KIYIVLRRRR…SQQKEKKATQ (163 aa). At 214–373 the chain is on the cytoplasmic side; the sequence is IVLRRRRKRV…SQQKEKKATQ (160 aa). The segment at 281–332 is disordered; it reads MEMLSSTSPPERTRYSPIPPSHHQLTLPDPSHHGLHSTPDSPAKPEKNGHAK. The helical transmembrane segment at 374–395 threads the bilayer; sequence MLAIVLGVFIICWLPFFITHIL. At 396–409 the chain is on the extracellular side; sequence NIHCDCNIPPVLYS. A disulfide bond links Cys-399 and Cys-401. A helical transmembrane segment spans residues 410–431; it reads AFTWLGYVNSAVNPIIYTTFNI. Over 432-443 the chain is Cytoplasmic; it reads EFRKAFLKILHC. Cys-443 carries S-palmitoyl cysteine lipidation.

This sequence belongs to the G-protein coupled receptor 1 family. As to quaternary structure, forms homo- and heterooligomers with DRD4. The interaction with DRD4 may modulate agonist-induced downstream signaling. Interacts with CADPS and CADPS2. Interacts with GPRASP1, PPP1R9B and CLIC6. Interacts with ARRB2. Interacts with HTR2A. Interacts with DRD1. Interacts with KCNA2. In terms of processing, palmitoylated. Palmitoylation which is required for proper localization to the plasma membrane and stability of the receptor could be carried on by ZDHHC4, ZDHHC3 and ZDHHC8.

The protein localises to the cell membrane. It is found in the golgi apparatus membrane. Its function is as follows. Dopamine receptor whose activity is mediated by G proteins which inhibit adenylyl cyclase. Positively regulates postnatal regression of retinal hyaloid vessels via suppression of VEGFR2/KDR activity, downstream of OPN5. This is D(2) dopamine receptor (DRD2) from Chlorocebus aethiops (Green monkey).